Consider the following 373-residue polypeptide: Opsin Rh1 (373 aa).

The Extracellular portion of the chain corresponds to 1 to 49 (MESFAVAAAQLGPHFAPLSNGSVVDKVTPDMAHLISPYWNQFPAMDPIW). N-linked (GlcNAc...) asparagine glycosylation is present at Asn-20. A helical transmembrane segment spans residues 50–74 (AKILTAYMIMIGMISWCGNGVVIYI). Topologically, residues 75–86 (FATTKSLRTPAN) are cytoplasmic. The chain crosses the membrane as a helical span at residues 87–112 (LLVINLAISDFGIMITNTPMMGINLY). Over 113-126 (FETWVLGPMMCDIY) the chain is Extracellular. Cysteines 123 and 200 form a disulfide. Residues 127 to 146 (AGLGSAFGCSSIWSMCMISL) form a helical membrane-spanning segment. At 147–165 (DRYQVIVKGMAGRPMTIPL) the chain is on the cytoplasmic side. A helical transmembrane segment spans residues 166-189 (ALGKIAYIWFMSSIWCLAPAFGWS). Over 190–213 (RYVPEGNLTSCGIDYLERDWNPRS) the chain is Extracellular. Residue Asn-196 is glycosylated (N-linked (GlcNAc...) asparagine). The chain crosses the membrane as a helical span at residues 214–241 (YLIFYSIFVYYIPLFLICYSYWFIIAAV). Over 242-276 (SAHEKAMREQAKKMNVKSLRSSEDAEKSAEGKLAK) the chain is Cytoplasmic. The helical transmembrane segment at 277–300 (VALVTITLWFMAWTPYLVINCMGL) threads the bilayer. Over 301 to 307 (FKFEGLT) the chain is Extracellular. A helical membrane pass occupies residues 308-332 (PLNTIWGACFAKSAACYNPIVYGIS). Position 319 is an N6-(retinylidene)lysine (Lys-319). Residues 333–373 (HPKYRLALKEKCPCCVFGKVDDGKSSDAQSQATASEAESKA) lie on the Cytoplasmic side of the membrane. A disordered region spans residues 354 to 373 (DGKSSDAQSQATASEAESKA). Over residues 358-373 (SDAQSQATASEAESKA) the composition is skewed to low complexity.

This sequence belongs to the G-protein coupled receptor 1 family. Opsin subfamily. Phosphorylated on some or all of the serine and threonine residues present in the C-terminal region.

Its subcellular location is the cell projection. The protein resides in the rhabdomere membrane. Its function is as follows. Visual pigments are the light-absorbing molecules that mediate vision. They consist of an apoprotein, opsin, covalently linked to cis-retinal. The protein is Opsin Rh1 (ninaE) of Drosophila melanogaster (Fruit fly).